The following is a 378-amino-acid chain: Chaperone protein DnaJ (378 aa).

Residues 6-70 (DYYDVLGVSR…QKRQQYDQFG (65 aa)) form the J domain. Residues 137–219 (GKTSEISYSR…CHGKGVKTQK (83 aa)) form a CR-type zinc finger. C150, C153, C167, C170, C193, C196, C207, and C210 together coordinate Zn(2+). CXXCXGXG motif repeat units follow at residues 150–157 (CEVCKGSG), 167–174 (CDKCGGSG), 193–200 (CDKCTGSG), and 207–214 (CHNCHGKG).

This sequence belongs to the DnaJ family. Homodimer. The cofactor is Zn(2+).

The protein resides in the cytoplasm. Functionally, participates actively in the response to hyperosmotic and heat shock by preventing the aggregation of stress-denatured proteins and by disaggregating proteins, also in an autonomous, DnaK-independent fashion. Unfolded proteins bind initially to DnaJ; upon interaction with the DnaJ-bound protein, DnaK hydrolyzes its bound ATP, resulting in the formation of a stable complex. GrpE releases ADP from DnaK; ATP binding to DnaK triggers the release of the substrate protein, thus completing the reaction cycle. Several rounds of ATP-dependent interactions between DnaJ, DnaK and GrpE are required for fully efficient folding. Also involved, together with DnaK and GrpE, in the DNA replication of plasmids through activation of initiation proteins. This is Chaperone protein DnaJ from Lactobacillus delbrueckii subsp. bulgaricus (strain ATCC 11842 / DSM 20081 / BCRC 10696 / JCM 1002 / NBRC 13953 / NCIMB 11778 / NCTC 12712 / WDCM 00102 / Lb 14).